Reading from the N-terminus, the 509-residue chain is Ribonuclease Y (509 aa).

Residues 5–25 (IIILLSVFCGIFFICFIICSS) form a helical membrane-spanning segment. In terms of domain architecture, KH spans 199–259 (TTNIVKLPSD…IRREIATRTL (61 aa)). Residues 325–418 (VLAHSIEVAK…VAIADSISAS (94 aa)) enclose the HD domain.

Belongs to the RNase Y family.

Its subcellular location is the cell membrane. In terms of biological role, endoribonuclease that initiates mRNA decay. The sequence is that of Ribonuclease Y from Mycoplasma mycoides subsp. mycoides SC (strain CCUG 32753 / NCTC 10114 / PG1).